We begin with the raw amino-acid sequence, 496 residues long: Probable zinc metalloprotease SNOG_06590 (496 aa).

The first 20 residues, 1-20 (MRSSMFFAVCAAAALQTALS), serve as a signal peptide directing secretion. N-linked (GlcNAc...) asparagine glycosylation occurs at asparagine 138. Histidine 161, aspartate 181, and glutamate 226 together coordinate Zn(2+). Asparagine 241 carries an N-linked (GlcNAc...) asparagine glycan. Residue aspartate 253 participates in Zn(2+) binding. Residues asparagine 282, asparagine 361, asparagine 409, asparagine 415, and asparagine 457 are each glycosylated (N-linked (GlcNAc...) asparagine). The 95-residue stretch at 402 to 496 (EPMNVGINTT…PFPFGCTRNC (95 aa)) folds into the Fibronectin type-III domain.

This sequence belongs to the peptidase M28 family. M28B subfamily. Zn(2+) is required as a cofactor.

The protein resides in the secreted. The polypeptide is Probable zinc metalloprotease SNOG_06590 (Phaeosphaeria nodorum (strain SN15 / ATCC MYA-4574 / FGSC 10173) (Glume blotch fungus)).